The chain runs to 364 residues: Alanine racemase (364 aa).

Lys-35 serves as the catalytic Proton acceptor; specific for D-alanine. An N6-(pyridoxal phosphate)lysine modification is found at Lys-35. Position 131 (Arg-131) interacts with substrate. Residue Tyr-256 is the Proton acceptor; specific for L-alanine of the active site. Met-304 lines the substrate pocket.

It belongs to the alanine racemase family. Pyridoxal 5'-phosphate is required as a cofactor.

It catalyses the reaction L-alanine = D-alanine. It functions in the pathway amino-acid biosynthesis; D-alanine biosynthesis; D-alanine from L-alanine: step 1/1. Catalyzes the interconversion of L-alanine and D-alanine. May also act on other amino acids. The chain is Alanine racemase (alr) from Chromohalobacter salexigens (strain ATCC BAA-138 / DSM 3043 / CIP 106854 / NCIMB 13768 / 1H11).